The chain runs to 233 residues: Small ribosomal subunit protein uS3 (233 aa).

One can recognise a KH type-2 domain in the interval 39-107 (VRKYLTKELE…PAQINIAEVR (69 aa)).

It belongs to the universal ribosomal protein uS3 family. In terms of assembly, part of the 30S ribosomal subunit. Forms a tight complex with proteins S10 and S14.

In terms of biological role, binds the lower part of the 30S subunit head. Binds mRNA in the 70S ribosome, positioning it for translation. The chain is Small ribosomal subunit protein uS3 from Pectobacterium carotovorum subsp. carotovorum (strain PC1).